Consider the following 500-residue polypeptide: MAGHSNSMALFSFSLLWLCSGVLGTDTEERLVEHLLDPSRYNKLIRPATNGSELVTVQLMVSLAQLISVHEREQIMTTNVWLTQEWEDYRLTWKPEDFDNMKKVRLPSKHIWLPDVVLYNNADGMYEVSFYSNAVVSYDGSIFWLPPAIYKSACKIEVKHFPFDQQNCTMKFRSWTYDRTEIDLVLKSDVASLDDFTPSGEWDIIALPGRRNENPDDSTYVDITYDFIIRRKPLFYTINLIIPCVLITSLAILVFYLPSDCGEKMTLCISVLLALTVFLLLISKIVPPTSLDVPLVGKYLMFTMVLVTFSIVTSVCVLNVHHRSPTTHTMAPWVKVVFLEKLPTLLFLQQPRHRCARQRLRLRRRQREREGAGALFFREGPAADPCTCFVNPASVQGLAGAFRAEPTAAGPGRSVGPCSCGLREAVDGVRFIADHMRSEDDDQSVREDWKYVAMVIDRLFLWIFVFVCVFGTVGMFLQPLFQNYTATTFLHPDHSAPSSK.

The N-terminal stretch at 1 to 24 is a signal peptide; the sequence is MAGHSNSMALFSFSLLWLCSGVLG. At 25–237 the chain is on the extracellular side; sequence TDTEERLVEH…IIRRKPLFYT (213 aa). 2 N-linked (GlcNAc...) asparagine glycosylation sites follow: asparagine 50 and asparagine 167. Cysteine 154 and cysteine 168 are disulfide-bonded. A helical membrane pass occupies residues 238–258; it reads INLIIPCVLITSLAILVFYLP. Over 259–266 the chain is Cytoplasmic; the sequence is SDCGEKMT. Residues 267–287 form a helical membrane-spanning segment; it reads LCISVLLALTVFLLLISKIVP. Residues 288-299 lie on the Extracellular side of the membrane; that stretch reads PTSLDVPLVGKY. The chain crosses the membrane as a helical span at residues 300 to 320; that stretch reads LMFTMVLVTFSIVTSVCVLNV. Residues 321–458 are Cytoplasmic-facing; sequence HHRSPTTHTM…WKYVAMVIDR (138 aa). A helical membrane pass occupies residues 459-479; that stretch reads LFLWIFVFVCVFGTVGMFLQP.

Belongs to the ligand-gated ion channel (TC 1.A.9) family. Acetylcholine receptor (TC 1.A.9.1) subfamily. Beta-2/CHRNB2 sub-subfamily. Neuronal AChR is a heteropentamer composed of two different types of subunits: alpha and beta. CHRNB2/Beta-2 subunit can be combined to CHRNA2/alpha-2, CHRNA3/alpha-3 or CHRNA4/alpha-4, CHRNA5/alpha-5, CHRNA6/alpha-6 and CHRNB3/beta-3 to give rise to functional receptors. CHRNA2:CHRNB2 and CHRNA4:CHRNB2 nAChR complexes exist in two subtypes: LS (low agonist sensitivity) with a (CHRNA2/4)3:(CHRNB2)2 and HS (high agonist sensitivity) with a (CHRNA2/4)2:(CHRNB2)3 stoichiometry; the subtypes differ in their subunit binding interfaces which are involved in ligand binding. Cells produce predominantly an (CHRNA4)3:(CHRNB2)2 nAChR. The stoichiometric form (CHRNA4)2:(CHRNB2)3 expression is selectively up-regulated by nicotine and has lower single channel conductance and calcium permeability. Also part of the stoichiometric forms: (CHRNA4:CHRNB2)2:CHRNB3 or (CHRNA6:CHRNB2)2:CHRNB3. Can form heteropentamers with CHRNA7, mainly found in basal forebrain cholinergic neurons. Interacts with RIC3; which is required for proper folding and assembly. Interacts with LYPD6. Expressed in most regions of the CNS.

The protein localises to the synaptic cell membrane. It localises to the cell membrane. The catalysed reaction is Ca(2+)(in) = Ca(2+)(out). The enzyme catalyses K(+)(in) = K(+)(out). It catalyses the reaction Na(+)(in) = Na(+)(out). Activated by a myriad of ligands such as acetylcholine, cytisine, nicotine, choline and epibatidine. Channel potentiation by calcium is stoichiometry-selective, CHRNA4:CHRNB2 nACh receptor is achieved by calcium association with topographically distinct sites framed by anionic residues within the CHRNA4 subunit and between the CHRNA4 and CHRNB2 subunits. Oligomeric amyloid-beta protein 42 activates specifially CHRNA7:CHRNB2 nAchRs. nAChR activity is inhibited by the antagonist alpha-conotoxins BuIA, PnIA, PnIC, GID and MII, small disulfide-constrained peptides from cone snails. Its function is as follows. Component of neuronal acetylcholine receptors (nAChRs) that function as pentameric, ligand-gated cation channels with high calcium permeability among other activities. nAChRs are excitatory neurotrasnmitter receptors formed by a collection of nAChR subunits known to mediate synaptic transmission in the nervous system and the neuromuscular junction. Each nAchR subunit confers differential attributes to channel properties, including activation, deactivation and desensitization kinetics, pH sensitivity, cation permeability, and binding to allosteric modulators. CHRNB2 forms heteropentameric neuronal acetylcholine receptors with CHRNA2, CHRNA3, CHRNA4 and CHRNA6, as well as CHRNA5 and CHRNB3 as accesory subunits. Found in two major stoichiometric forms,(CHRNA4)3:(CHRNB2)2 and (CHRNA4)2:(CHRNB2)3, the two stoichiometric forms differ in their unitary conductance, calcium permeability, ACh sensitivity and potentiation by divalent cation. Heteropentameric channels with CHRNA6 and CHRNA4 exhibit high sensitivity to ACh and nicotine and are predominantly expressed in only a few brain areas, including dopaminergic neurons, norepirephrine neurons and cells of the visual system. nAChrs containing CHRNA6 subunits mediate endogenous cholinergic modulation of dopamine and gamma-aminobutyric acid (GABA) release in response to nicotine at nerve terminals. Also forms functional nAChRs with other subunits such as CHRNA7:CHRNB2, mainly expressed in basal forebrain cholinergic neurons. This chain is Neuronal acetylcholine receptor subunit beta-2 (Chrnb2), found in Rattus norvegicus (Rat).